Consider the following 227-residue polypeptide: Cytidylate kinase (227 aa).

7 to 15 lines the ATP pocket; the sequence is GPAGSGKST.

This sequence belongs to the cytidylate kinase family. Type 1 subfamily.

It localises to the cytoplasm. The enzyme catalyses CMP + ATP = CDP + ADP. It carries out the reaction dCMP + ATP = dCDP + ADP. In Salinibacter ruber (strain DSM 13855 / M31), this protein is Cytidylate kinase.